The sequence spans 49 residues: IgW transmembrane form Tm2T7/Tm7T7/Tm3T3 (49 aa).

Asparagine 3 carries an N-linked (GlcNAc...) asparagine glycan. The chain crosses the membrane as a helical span at residues 25 to 45 (VAAFAILFILSFLYSTFVTVV).

As to expression, expressed in the spleen. May also be expressed in other lymphoid tissues.

The protein localises to the membrane. The sequence is that of IgW transmembrane form Tm2T7/Tm7T7/Tm3T3 from Heterodontus francisci (Horn shark).